The chain runs to 257 residues: Major prion protein (257 aa).

A signal peptide spans 1 to 24; the sequence is MVKSHIGSWLLVLFVATWSDIGFC. The tract at residues 25–41 is interaction with ADGRG6; the sequence is KKRPKPGGGWNTGGSRY. Residues 25–234 are interaction with GRB2, ERI3 and SYN1; it reads KKRPKPGGGW…ESEAYYQRGA (210 aa). The tract at residues 27-114 is disordered; that stretch reads RPKPGGGWNT…KPSKPKTNMK (88 aa). 5 repeat units span residues 54 to 62, 63 to 70, 71 to 78, 79 to 86, and 87 to 95. Positions 54–95 are 5 X 8 AA tandem repeats of P-H-G-G-G-W-G-Q; it reads PQGGGGWGQPHGGGWGQPHGGGWGQPHGGGWGQPHGGGGWGQ. Gly residues predominate over residues 55–101; that stretch reads QGGGGWGQPHGGGWGQPHGGGWGQPHGGGWGQPHGGGGWGQGGGSHG. Cu(2+)-binding residues include His-64, Gly-65, Gly-66, His-72, Gly-73, Gly-74, His-80, Gly-81, Gly-82, His-88, Gly-90, and Gly-91. Cys-183 and Cys-218 form a disulfide bridge. 2 N-linked (GlcNAc...) asparagine glycosylation sites follow: Asn-185 and Asn-201. Residue Ala-234 is the site of GPI-anchor amidated alanine attachment. The propeptide at 235 to 257 is removed in mature form; that stretch reads SAILFSPPPVILLISLLILLIVG.

The protein belongs to the prion family. In terms of assembly, monomer and homodimer. Has a tendency to aggregate into amyloid fibrils containing a cross-beta spine, formed by a steric zipper of superposed beta-strands. Soluble oligomers may represent an intermediate stage on the path to fibril formation. Copper binding may promote oligomerization. Interacts with GRB2, APP, ERI3/PRNPIP and SYN1. Mislocalized cytosolically exposed PrP interacts with MGRN1; this interaction alters MGRN1 subcellular location and causes lysosomal enlargement. Interacts with APP. Interacts with KIAA1191. Interacts with ADGRG6.

It localises to the cell membrane. The protein localises to the golgi apparatus. Its function is as follows. Its primary physiological function is unclear. May play a role in neuronal development and synaptic plasticity. May be required for neuronal myelin sheath maintenance. May promote myelin homeostasis through acting as an agonist for ADGRG6 receptor. May play a role in iron uptake and iron homeostasis. Soluble oligomers are toxic to cultured neuroblastoma cells and induce apoptosis (in vitro). Association with GPC1 (via its heparan sulfate chains) targets PRNP to lipid rafts. Also provides Cu(2+) or Zn(2+) for the ascorbate-mediated GPC1 deaminase degradation of its heparan sulfate side chains. This Neovison vison (American mink) protein is Major prion protein (PRNP).